Reading from the N-terminus, the 117-residue chain is Immunoglobulin lambda variable 7-43 (117 aa).

The N-terminal stretch at 1–19 (MAWTPLFLFLLTCCPGSNS) is a signal peptide. The tract at residues 20-44 (QTVVTQEPSLTVSPGGTVTLTCASS) is framework-1. An Ig-like domain is found at 20–117 (QTVVTQEPSL…YCLLYYGGAQ (98 aa)). Cysteine 41 and cysteine 109 are disulfide-bonded. The segment at 45–53 (TGAVTSGYY) is complementarity-determining-1. The tract at residues 54 to 70 (PNWFQQKPGQAPRALIY) is framework-2. The segment at 71–73 (STS) is complementarity-determining-2. The segment at 74 to 109 (NKHSWTPARFSGSLLGGKAALTLSGVQPEDEAEYYC) is framework-3. A complementarity-determining-3 region spans residues 110-117 (LLYYGGAQ).

In terms of assembly, immunoglobulins are composed of two identical heavy chains and two identical light chains; disulfide-linked.

The protein localises to the secreted. It localises to the cell membrane. Its function is as follows. V region of the variable domain of immunoglobulin light chains that participates in the antigen recognition. Immunoglobulins, also known as antibodies, are membrane-bound or secreted glycoproteins produced by B lymphocytes. In the recognition phase of humoral immunity, the membrane-bound immunoglobulins serve as receptors which, upon binding of a specific antigen, trigger the clonal expansion and differentiation of B lymphocytes into immunoglobulins-secreting plasma cells. Secreted immunoglobulins mediate the effector phase of humoral immunity, which results in the elimination of bound antigens. The antigen binding site is formed by the variable domain of one heavy chain, together with that of its associated light chain. Thus, each immunoglobulin has two antigen binding sites with remarkable affinity for a particular antigen. The variable domains are assembled by a process called V-(D)-J rearrangement and can then be subjected to somatic hypermutations which, after exposure to antigen and selection, allow affinity maturation for a particular antigen. This is Immunoglobulin lambda variable 7-43 from Homo sapiens (Human).